A 432-amino-acid chain; its full sequence is Glutamyl-tRNA reductase (432 aa).

Substrate is bound by residues 49 to 52, S109, 114 to 116, and Q120; these read TCNR and EGQ. Residue C50 is the Nucleophile of the active site. 198–203 is a binding site for NADP(+); the sequence is GAGRMS.

This sequence belongs to the glutamyl-tRNA reductase family. Homodimer.

It carries out the reaction (S)-4-amino-5-oxopentanoate + tRNA(Glu) + NADP(+) = L-glutamyl-tRNA(Glu) + NADPH + H(+). It participates in porphyrin-containing compound metabolism; protoporphyrin-IX biosynthesis; 5-aminolevulinate from L-glutamyl-tRNA(Glu): step 1/2. It functions in the pathway porphyrin-containing compound metabolism; chlorophyll biosynthesis. In terms of biological role, catalyzes the NADPH-dependent reduction of glutamyl-tRNA(Glu) to glutamate 1-semialdehyde (GSA). In Synechococcus sp. (strain CC9902), this protein is Glutamyl-tRNA reductase.